We begin with the raw amino-acid sequence, 575 residues long: Chaperonin CPN60-2, mitochondrial (575 aa).

The transit peptide at Met-1–Tyr-32 directs the protein to the mitochondrion.

This sequence belongs to the chaperonin (HSP60) family.

The protein localises to the mitochondrion. Functionally, implicated in mitochondrial protein import and macromolecular assembly. May facilitate the correct folding of imported proteins. May also prevent misfolding and promote the refolding and proper assembly of unfolded polypeptides generated under stress conditions in the mitochondrial matrix. The protein is Chaperonin CPN60-2, mitochondrial (CPN60-2) of Cucurbita maxima (Pumpkin).